We begin with the raw amino-acid sequence, 332 residues long: Glyceraldehyde-3-phosphate dehydrogenase 1 (332 aa).

Residues 11 to 12 (RI), aspartate 33, and arginine 78 each bind NAD(+). D-glyceraldehyde 3-phosphate-binding positions include 149–151 (SCT), threonine 180, 209–210 (TG), and arginine 232. The active-site Nucleophile is cysteine 150. Residue asparagine 314 participates in NAD(+) binding.

The protein belongs to the glyceraldehyde-3-phosphate dehydrogenase family. In terms of assembly, homotetramer.

It localises to the cytoplasm. The enzyme catalyses D-glyceraldehyde 3-phosphate + phosphate + NAD(+) = (2R)-3-phospho-glyceroyl phosphate + NADH + H(+). The protein operates within carbohydrate degradation; glycolysis; pyruvate from D-glyceraldehyde 3-phosphate: step 1/5. This Candida glabrata (strain ATCC 2001 / BCRC 20586 / JCM 3761 / NBRC 0622 / NRRL Y-65 / CBS 138) (Yeast) protein is Glyceraldehyde-3-phosphate dehydrogenase 1 (GPD1).